Reading from the N-terminus, the 51-residue chain is UPF0391 membrane protein PsycPRwf_2202 (51 aa).

2 helical membrane passes run 6–26 (IIFA…VAGL) and 27–47 (SQNF…IGFI).

Belongs to the UPF0391 family.

It is found in the cell membrane. The chain is UPF0391 membrane protein PsycPRwf_2202 from Psychrobacter sp. (strain PRwf-1).